The sequence spans 226 residues: Membrane protein (226 aa).

At 1–11 (MSNGSIPVDEV) the chain is on the virion surface side. A helical transmembrane segment spans residues 12 to 32 (IEHLRNWNFTWNIILTILLVV). The Intravirion portion of the chain corresponds to 33–41 (LQYGHYKYS). Residues 42 to 62 (VFLYGVKMAILWILWPLVLAL) form a helical membrane-spanning segment. The Virion surface portion of the chain corresponds to 63–75 (SLFDAWASFQVNW). A helical membrane pass occupies residues 76–96 (VFFAFSILMACITLMLWIMYF). Residues 97 to 226 (VNSIRLWRRT…TDSEKVLHLV (130 aa)) are Intravirion-facing. Residues 200-216 (RSKHGDYSAVSNPSAVL) are interaction with N protein.

This sequence belongs to the alphacoronaviruses M protein family. In terms of assembly, homomultimer. Interacts with envelope E protein in the budding compartment of the host cell, which is located between endoplasmic reticulum and the Golgi complex. Forms a complex with HE and S proteins. Interacts with nucleocapsid N protein. This interaction probably participates in RNA packaging into the virus.

Its subcellular location is the virion membrane. It is found in the host Golgi apparatus membrane. Functionally, component of the viral envelope that plays a central role in virus morphogenesis and assembly via its interactions with other viral proteins. This Sus scrofa (Pig) protein is Membrane protein.